The chain runs to 144 residues: Large ribosomal subunit protein uL15 (144 aa).

The disordered stretch occupies residues 1–54 (MRLNTLSPAEGSKKAGKRLGRGIGSGLGKTGGRGHKGQKSRSGGGVRRGFEGGQ). The span at 21 to 31 (RGIGSGLGKTG) shows a compositional bias: gly residues.

It belongs to the universal ribosomal protein uL15 family. Part of the 50S ribosomal subunit.

Its function is as follows. Binds to the 23S rRNA. This is Large ribosomal subunit protein uL15 from Escherichia coli (strain K12 / MC4100 / BW2952).